The primary structure comprises 142 residues: Small ribosomal subunit protein bS6 (142 aa).

The segment covering 113–136 has biased composition (basic and acidic residues); sequence IKKEPREPREPRAPREPKAEKIEE. The segment at 113-142 is disordered; that stretch reads IKKEPREPREPRAPREPKAEKIEEQTFSEE.

Belongs to the bacterial ribosomal protein bS6 family.

Binds together with bS18 to 16S ribosomal RNA. In Campylobacter curvus (strain 525.92), this protein is Small ribosomal subunit protein bS6.